Here is a 291-residue protein sequence, read N- to C-terminus: Citrate lyase subunit beta (291 aa).

Substrate is bound by residues Arg66 and Glu129. 2 residues coordinate Mg(2+): Glu129 and Asp156.

This sequence belongs to the HpcH/HpaI aldolase family. Citrate lyase beta subunit subfamily. Oligomer with a subunit composition of (alpha,beta,gamma)6. Requires Mg(2+) as cofactor.

It is found in the cytoplasm. The catalysed reaction is citrate = oxaloacetate + acetate. The enzyme catalyses (3S)-citryl-CoA = oxaloacetate + acetyl-CoA. Its function is as follows. Represents a citryl-ACP lyase. The polypeptide is Citrate lyase subunit beta (citE) (Haemophilus influenzae (strain ATCC 51907 / DSM 11121 / KW20 / Rd)).